A 430-amino-acid polypeptide reads, in one-letter code: Aspartate aminotransferase, mitochondrial (430 aa).

The transit peptide at 1-29 (MALLHSGRFLSGVAAAFHPGLAAAASARA) directs the protein to the mitochondrion. Phosphothreonine is present on T48. K59 is modified (N6-acetyllysine). Residue G65 coordinates substrate. K73 bears the N6-acetyllysine; alternate mark. An N6-succinyllysine; alternate modification is found at K73. K82 is subject to N6-acetyllysine. Residue K90 is modified to N6-acetyllysine; alternate. K90 is subject to N6-succinyllysine; alternate. Y96 is subject to 3'-nitrotyrosine; alternate. Y96 bears the Phosphotyrosine; alternate mark. N6-acetyllysine; alternate occurs at positions 107 and 122. 2 positions are modified to N6-succinyllysine; alternate: K107 and K122. Residue S143 is modified to Phosphoserine. K159 carries the N6-acetyllysine; alternate modification. K159 carries the post-translational modification N6-succinyllysine; alternate. A substrate-binding site is contributed by W162. K185 carries the post-translational modification N6-acetyllysine; alternate. The residue at position 185 (K185) is an N6-succinyllysine; alternate. A substrate-binding site is contributed by N215. K227 is subject to N6-succinyllysine. The residue at position 234 (K234) is an N6-acetyllysine. Residues K279 and K296 each carry the N6-acetyllysine; alternate modification. At K279 the chain carries N6-(pyridoxal phosphate)lysine; alternate. K296 bears the N6-succinyllysine; alternate mark. K302 is subject to N6-acetyllysine. K309 is subject to N6-acetyllysine; alternate. N6-succinyllysine; alternate is present on K309. R313 is subject to Asymmetric dimethylarginine. K338 is subject to N6-acetyllysine; alternate. K338 is subject to N6-succinyllysine; alternate. Position 345 is an N6-acetyllysine (K345). Residue K363 is modified to N6-acetyllysine; alternate. K363 is modified (N6-succinyllysine; alternate). Residues K364 and K387 each carry the N6-acetyllysine modification. N6-acetyllysine; alternate occurs at positions 396 and 404. An N6-succinyllysine; alternate mark is found at K396 and K404. R407 is a substrate binding site.

The protein belongs to the class-I pyridoxal-phosphate-dependent aminotransferase family. Homodimer. Pyridoxal 5'-phosphate is required as a cofactor.

It is found in the mitochondrion matrix. Its subcellular location is the cell membrane. The enzyme catalyses L-aspartate + 2-oxoglutarate = oxaloacetate + L-glutamate. It carries out the reaction L-kynurenine + 2-oxoglutarate = 4-(2-aminophenyl)-2,4-dioxobutanoate + L-glutamate. Its function is as follows. Catalyzes the irreversible transamination of the L-tryptophan metabolite L-kynurenine to form kynurenic acid (KA). As a member of the malate-aspartate shuttle, it has a key role in the intracellular NAD(H) redox balance. Is important for metabolite exchange between mitochondria and cytosol, and for amino acid metabolism. Facilitates cellular uptake of long-chain free fatty acids. This chain is Aspartate aminotransferase, mitochondrial (GOT2), found in Bos taurus (Bovine).